We begin with the raw amino-acid sequence, 355 residues long: MTARLRPELAGLPVYVPGKNVPGSIKLASNETVYGPLPSVHAAIERAVAVVNRYPDNACVDLKAALAMHLGSDVAPEQIAVGSGSVTLCQQLVQITSAAGDEVMMGWRSFECYLPIVQVAGAIAVKVPLREHTYDLDAMLAAITDRTRLIFVCNPNNPTSTVVDPDALVRFVDAVPADILIAIDEAYVEYIRDGLLPNSLELALSRSNVVVLRTFSKAYGLAGLRVGYAIGHPELITALDKVVMPFAVTNVAQAAAIASLEASGELMARTDALVAERTRVSTALRDAGFELPPSQANFLWLPLGSRTEDFVQEAANARLVVRPFASEGVRVTIGAPAENDALLQFACDWIARTER.

An N6-(pyridoxal phosphate)lysine modification is found at K217.

It belongs to the class-II pyridoxal-phosphate-dependent aminotransferase family. Homodimer. Pyridoxal 5'-phosphate serves as cofactor.

The enzyme catalyses an aromatic L-alpha-amino acid + 2-oxoglutarate = an aromatic oxo-acid + L-glutamate. In terms of biological role, aminotransferase that catalyzes the conversion of aromatic amino acids and 2-oxoglutarate into corresponding aromatic oxo acids and L-glutamate. This chain is Aromatic amino acid aminotransferase, found in Mycolicibacterium paratuberculosis (strain ATCC BAA-968 / K-10) (Mycobacterium paratuberculosis).